The primary structure comprises 487 residues: Glutamyl-tRNA(Gln) amidotransferase subunit A (487 aa).

Residues Lys-82 and Ser-157 each act as charge relay system in the active site. Residue Ser-181 is the Acyl-ester intermediate of the active site.

This sequence belongs to the amidase family. GatA subfamily. As to quaternary structure, heterotrimer of A, B and C subunits.

It carries out the reaction L-glutamyl-tRNA(Gln) + L-glutamine + ATP + H2O = L-glutaminyl-tRNA(Gln) + L-glutamate + ADP + phosphate + H(+). Functionally, allows the formation of correctly charged Gln-tRNA(Gln) through the transamidation of misacylated Glu-tRNA(Gln) in organisms which lack glutaminyl-tRNA synthetase. The reaction takes place in the presence of glutamine and ATP through an activated gamma-phospho-Glu-tRNA(Gln). This Fusobacterium nucleatum subsp. nucleatum (strain ATCC 25586 / DSM 15643 / BCRC 10681 / CIP 101130 / JCM 8532 / KCTC 2640 / LMG 13131 / VPI 4355) protein is Glutamyl-tRNA(Gln) amidotransferase subunit A.